The sequence spans 427 residues: Cholecystokinin receptor type A (427 aa).

Over 1–41 (MDAVASLLGNASGIPPPCELGLDNETLFCLDQPPPSKEWQP) the chain is Extracellular. Residues Asn10 and Asn24 are each glycosylated (N-linked (GlcNAc...) asparagine). Cys18 and Cys29 are joined by a disulfide. Residues 42–67 (AVQILLYSLIFLLSVLGNTLVITVLI) traverse the membrane as a helical segment. At 68–77 (RNKRMRTVTN) the chain is on the cytoplasmic side. The chain crosses the membrane as a helical span at residues 78–104 (IFLLSLAISDLMLCLFCMPFNLIPNLL). The Extracellular segment spans residues 105–115 (KDFIFGSALCK). Residues Cys114 and Cys196 are joined by a disulfide bond. The helical transmembrane segment at 116-137 (TTTYLMGTSVSVSTLNLVAISL) threads the bilayer. Over 138–157 (ERYGAICKPLQSRVWQTKSH) the chain is Cytoplasmic. A helical transmembrane segment spans residues 158–178 (ALKVIAATWCLSFAIMTPYPI). Topologically, residues 179–210 (YSNLVPFTKTNNQTANMCRFLLPSDVMQQAWH) are extracellular. An N-linked (GlcNAc...) asparagine glycan is attached at Asn190. Residues 211–234 (TFLLLILFLIPGIVMMVAYGMISL) traverse the membrane as a helical segment. Residues 235 to 312 (ELYQGIKFDA…TLMAKKRVIR (78 aa)) are Cytoplasmic-facing. The chain crosses the membrane as a helical span at residues 313 to 333 (MLMVIVVLFFLCWMPIFSANA). The Extracellular portion of the chain corresponds to 334-348 (WRAYDTVSAERRLSG). The chain crosses the membrane as a helical span at residues 349-372 (TPISFILLLSYTSSCVNPIIYCFM). Over 373-427 (NRRFRLGFMATFPCCPNPGPPGPRAEAGEEEEGRTTRASLSRYSYSHMSASAPPS) the chain is Cytoplasmic. Cys386 carries the S-palmitoyl cysteine lipid modification. Positions 391–427 (GPPGPRAEAGEEEEGRTTRASLSRYSYSHMSASAPPS) are disordered. Polar residues predominate over residues 411–421 (SLSRYSYSHMS).

Belongs to the G-protein coupled receptor 1 family.

It localises to the cell membrane. Functionally, receptor for cholecystokinin. Mediates pancreatic growth and enzyme secretion, smooth muscle contraction of the gall bladder and stomach. Has a 1000-fold higher affinity for CCK rather than for gastrin. It modulates feeding and dopamine-induced behavior in the central and peripheral nervous system. This receptor mediates its action by association with G proteins that activate a phosphatidylinositol-calcium second messenger system. In Oryctolagus cuniculus (Rabbit), this protein is Cholecystokinin receptor type A (CCKAR).